The sequence spans 309 residues: Ribosomal RNA large subunit methyltransferase F (309 aa).

The protein belongs to the methyltransferase superfamily. METTL16/RlmF family.

The protein localises to the cytoplasm. It carries out the reaction adenosine(1618) in 23S rRNA + S-adenosyl-L-methionine = N(6)-methyladenosine(1618) in 23S rRNA + S-adenosyl-L-homocysteine + H(+). Functionally, specifically methylates the adenine in position 1618 of 23S rRNA. The protein is Ribosomal RNA large subunit methyltransferase F of Cronobacter sakazakii (strain ATCC BAA-894) (Enterobacter sakazakii).